The following is a 235-amino-acid chain: Protocatechuate 3,4-dioxygenase beta chain (235 aa).

Positions 107, 146, 159, and 161 each coordinate Fe cation.

It belongs to the intradiol ring-cleavage dioxygenase family. As to quaternary structure, the enzyme is an oligomer of 12 copies of the alpha and beta chains. Fe(3+) is required as a cofactor.

It carries out the reaction 3,4-dihydroxybenzoate + O2 = 3-carboxy-cis,cis-muconate + 2 H(+). It functions in the pathway aromatic compound metabolism; beta-ketoadipate pathway; 3-carboxy-cis,cis-muconate from 3,4-dihydroxybenzoate: step 1/1. Functionally, plays an essential role in the utilization of numerous aromatic and hydroaromatic compounds via the beta-ketoadipate pathway. The sequence is that of Protocatechuate 3,4-dioxygenase beta chain (pcaH) from Burkholderia cepacia (Pseudomonas cepacia).